Reading from the N-terminus, the 415-residue chain is Phosphoglycerate kinase (415 aa).

Val22, Asp23, Phe24, Asn25, Gln37, Arg38, Ser61, His62, Gly64, Arg65, Arg121, His168, and Arg169 together coordinate (2R)-3-phosphoglycerate. Residue Gly212 participates in ADP binding. Gly212 provides a ligand contact to CDP. AMP-binding residues include Ala213 and Lys214. Ala213 is an ATP binding site. Ala213 contacts Mg(2+). Positions 216 and 217 each coordinate Mg(2+). Asp217 contacts CDP. Lys218 is an AMP binding site. Residue Lys218 coordinates ATP. ADP is bound at residue Gly236. Gly236 is a CDP binding site. 2 residues coordinate AMP: Gly237 and Gly311. Residues Gly237 and Gly311 each coordinate ATP. Gly336 and Phe341 together coordinate CDP. Phe341 lines the ADP pocket. Glu342 is an AMP binding site. ATP contacts are provided by Glu342, Asp373, and Thr374. Residue Asp373 coordinates Mg(2+).

This sequence belongs to the phosphoglycerate kinase family. As to quaternary structure, monomer. Mg(2+) serves as cofactor.

The protein resides in the cytoplasm. It carries out the reaction (2R)-3-phosphoglycerate + ATP = (2R)-3-phospho-glyceroyl phosphate + ADP. It participates in carbohydrate degradation; glycolysis; pyruvate from D-glyceraldehyde 3-phosphate: step 2/5. Functionally, enzyme of the glycolytic pathway. Glycolysis is essential in glial cells but not in neurons; neurons rely on the citric acid cycle for their energy needs, and on lactate and alanine secreted into the hemolymph by glial cells to fuel it. This Drosophila melanogaster (Fruit fly) protein is Phosphoglycerate kinase.